Here is a 60-residue protein sequence, read N- to C-terminus: Large ribosomal subunit protein bL32 (60 aa).

Positions 1-23 are disordered; it reads MAVPRNRHSNARKNIRRSHHAKQ.

It belongs to the bacterial ribosomal protein bL32 family.

In Chlamydia abortus (strain DSM 27085 / S26/3) (Chlamydophila abortus), this protein is Large ribosomal subunit protein bL32.